We begin with the raw amino-acid sequence, 183 residues long: Dual specificity protein phosphatase 22-B (183 aa).

The region spanning 4 to 144 (GINKVLPDLY…LQEFQTGELQ (141 aa)) is the Tyrosine-protein phosphatase domain. Cys-88 (phosphocysteine intermediate) is an active-site residue.

This sequence belongs to the protein-tyrosine phosphatase family. Non-receptor class dual specificity subfamily.

The protein resides in the cytoplasm. It localises to the nucleus. The catalysed reaction is O-phospho-L-tyrosyl-[protein] + H2O = L-tyrosyl-[protein] + phosphate. It catalyses the reaction O-phospho-L-seryl-[protein] + H2O = L-seryl-[protein] + phosphate. The enzyme catalyses O-phospho-L-threonyl-[protein] + H2O = L-threonyl-[protein] + phosphate. Activates the Jnk signaling pathway. Dephosphorylates and deactivates p38 and stress-activated protein kinase/c-Jun N-terminal kinase (SAPK/JNK). This chain is Dual specificity protein phosphatase 22-B (dusp22b), found in Danio rerio (Zebrafish).